Consider the following 436-residue polypeptide: Cholecystokinin receptor type A (436 aa).

Over 1-41 the chain is Extracellular; it reads MDVVDSLLMNGSNITPPCELGLENETLFCLDQPQPSKEWQS. 2 N-linked (GlcNAc...) asparagine glycosylation sites follow: Asn-10 and Asn-24. Cys-18 and Cys-29 are joined by a disulfide. A helical membrane pass occupies residues 42–67; the sequence is AVQILLYSFIFLLSVLGNTLVITVLI. The Cytoplasmic segment spans residues 68-77; that stretch reads RNKRMRTVTN. A helical membrane pass occupies residues 78–104; the sequence is IFLLSLAVSDLMLCLFCMPFNLIPNLL. The Extracellular segment spans residues 105 to 115; sequence KDFIFGSAVCK. Residues Cys-114 and Cys-196 are joined by a disulfide bond. The helical transmembrane segment at 116–137 threads the bilayer; it reads TTTYFMGTSVSVSTFNLVAISL. Residues 138–157 are Cytoplasmic-facing; the sequence is ERYGAICRPLQSRVWQTKSH. Residues 158-178 form a helical membrane-spanning segment; that stretch reads ALKVIAATWCLSFTIMTPYPI. At 179-210 the chain is on the extracellular side; the sequence is YSNLVPFTKNNNQTANMCRFLLPSDAMQQSWQ. The N-linked (GlcNAc...) asparagine glycan is linked to Asn-190. A helical membrane pass occupies residues 211 to 234; it reads TFLLLILFLIPGVVMVVAYGLISL. At 235-321 the chain is on the cytoplasmic side; sequence ELYQGIKFDA…NLIAKKRVIR (87 aa). The tract at residues 252–280 is disordered; the sequence is EKRLSSGGGGGGGSSSSRYEDSDGCYLQK. A helical membrane pass occupies residues 322-342; it reads MLIVIVVLFFLCWMPIFSANA. Residues 343–357 lie on the Extracellular side of the membrane; the sequence is WRAYDTVSAEKHLSG. The chain crosses the membrane as a helical span at residues 358–381; it reads TPISFILLLSYTSSCVNPIIYCFM. Topologically, residues 382–436 are cytoplasmic; sequence NKRFRLGFMATFPCCPNPGPTGVRGEVGEEEDGRTIRASLSRYSYSHMSTSAPPH. Residue Cys-395 is the site of S-palmitoyl cysteine attachment.

The protein belongs to the G-protein coupled receptor 1 family.

Its subcellular location is the cell membrane. In terms of biological role, receptor for cholecystokinin. Mediates pancreatic growth and enzyme secretion, smooth muscle contraction of the gall bladder and stomach. Has a 1000-fold higher affinity for CCK rather than for gastrin. It modulates feeding and dopamine-induced behavior in the central and peripheral nervous system. This receptor mediates its action by association with G proteins that activate a phosphatidylinositol-calcium second messenger system. This is Cholecystokinin receptor type A (Cckar) from Mus musculus (Mouse).